The following is a 1001-amino-acid chain: Transcription-repair-coupling factor (1001 aa).

Positions 499-658 (DLSSHRVMDR…LSQIKGISSL (160 aa)) constitute a Helicase ATP-binding domain. Residue 512–519 (GDVGFGKT) participates in ATP binding. A DEEH box motif is present at residues 611–614 (DEEH). The Helicase C-terminal domain maps to 679–835 (LLKEIIYREL…SIAYHDLEIR (157 aa)).

It in the N-terminal section; belongs to the UvrB family. This sequence in the C-terminal section; belongs to the helicase family. RecG subfamily.

It is found in the cytoplasm. Its function is as follows. Couples transcription and DNA repair by recognizing RNA polymerase (RNAP) stalled at DNA lesions. Mediates ATP-dependent release of RNAP and its truncated transcript from the DNA, and recruitment of nucleotide excision repair machinery to the damaged site. In Helicobacter pylori (strain J99 / ATCC 700824) (Campylobacter pylori J99), this protein is Transcription-repair-coupling factor.